The primary structure comprises 116 residues: Aspartate 1-decarboxylase (116 aa).

Serine 25 acts as the Schiff-base intermediate with substrate; via pyruvic acid in catalysis. Residue serine 25 is modified to Pyruvic acid (Ser). Threonine 57 serves as a coordination point for substrate. The active-site Proton donor is the tyrosine 58. 73-75 (GAA) contacts substrate.

This sequence belongs to the PanD family. Heterooctamer of four alpha and four beta subunits. It depends on pyruvate as a cofactor. Post-translationally, is synthesized initially as an inactive proenzyme, which is activated by self-cleavage at a specific serine bond to produce a beta-subunit with a hydroxyl group at its C-terminus and an alpha-subunit with a pyruvoyl group at its N-terminus.

It is found in the cytoplasm. The catalysed reaction is L-aspartate + H(+) = beta-alanine + CO2. The protein operates within cofactor biosynthesis; (R)-pantothenate biosynthesis; beta-alanine from L-aspartate: step 1/1. In terms of biological role, catalyzes the pyruvoyl-dependent decarboxylation of aspartate to produce beta-alanine. This chain is Aspartate 1-decarboxylase, found in Leptospira interrogans serogroup Icterohaemorrhagiae serovar copenhageni (strain Fiocruz L1-130).